Consider the following 163-residue polypeptide: Peptidyl-prolyl cis-trans isomerase FKBP15-2 (163 aa).

The N-terminal stretch at 1 to 25 is a signal peptide; that stretch reads MASKMSLRYSLFLIFFSLISLQGFA. A PPIase FKBP-type domain is found at 52 to 140; sequence GDTIKVHYRG…IFDTELIAVN (89 aa). The tract at residues 142 to 163 is disordered; sequence KPAGGEEYGGDEDDEGYGNDEL. Positions 149–163 are enriched in acidic residues; it reads YGGDEDDEGYGNDEL. The Prevents secretion from ER signature appears at 160-163; that stretch reads NDEL.

It belongs to the FKBP-type PPIase family.

It localises to the endoplasmic reticulum lumen. The enzyme catalyses [protein]-peptidylproline (omega=180) = [protein]-peptidylproline (omega=0). PPIases accelerate the folding of proteins. It catalyzes the cis-trans isomerization of proline imidic peptide bonds in oligopeptides. The chain is Peptidyl-prolyl cis-trans isomerase FKBP15-2 (FKBP15-2) from Arabidopsis thaliana (Mouse-ear cress).